Consider the following 142-residue polypeptide: Mitochondrial import receptor subunit TOM22 homolog (142 aa).

The segment covering 1–11 has biased composition (low complexity); that stretch reads MAAAVAAAGAG. The segment at 1-40 is disordered; sequence MAAAVAAAGAGEPLSPEELVPKAEAEKAEEDLEEDDDDEL. An N-acetylalanine modification is found at A2. Topologically, residues 2-82 are cytoplasmic; sequence AAAVAAAGAG…VAQKMYRFSR (81 aa). S15 carries the post-translational modification Phosphoserine. Over residues 27-40 the composition is skewed to acidic residues; that stretch reads KAEEDLEEDDDDEL. The interval 41-50 is import sequence; necessary for mitochondrion outer membrane localization and integration in the TOM complex; that stretch reads DETLSERLWG. Position 43 is a phosphothreonine (T43). The residue at position 45 (S45) is a Phosphoserine. A helical transmembrane segment spans residues 83 to 103; it reads AALWIGTTSFMILVLPVVFET. Residues 83–103 form a TMD; necessary for mitochondrion outer membrane localization and integration in the TOM complex region; that stretch reads AALWIGTTSFMILVLPVVFET. At 104–142 the chain is on the mitochondrial intermembrane side; it reads EKLQMEQQQQLQQRQILLGPNTGLSGGMPGALPPLPGKI. A C-tail signal; necessary for mitochondrion outer membrane localization and integration in the TOM complex region spans residues 123–142; the sequence is PNTGLSGGMPGALPPLPGKI.

The protein belongs to the Tom22 family. As to quaternary structure, forms part of the preprotein translocase complex of the outer mitochondrial membrane (TOM complex) which consists of at least 7 different proteins (TOMM5, TOMM6, TOMM7, TOMM20, TOMM22, TOMM40 and TOMM70). Interacts with TOMM40. Interacts with PPP2R2B.

It is found in the mitochondrion outer membrane. Central receptor component of the translocase of the outer membrane of mitochondria (TOM complex) responsible for the recognition and translocation of cytosolically synthesized mitochondrial preproteins. Together with the peripheral receptor TOM20 functions as the transit peptide receptor and facilitates the movement of preproteins into the translocation pore. Required for the translocation across the mitochondrial outer membrane of cytochrome P450 monooxygenases. This Rattus norvegicus (Rat) protein is Mitochondrial import receptor subunit TOM22 homolog (Tomm22).